A 307-amino-acid polypeptide reads, in one-letter code: Elongation factor Ts (307 aa).

The tract at residues 79 to 82 (TDFV) is involved in Mg(2+) ion dislocation from EF-Tu.

This sequence belongs to the EF-Ts family.

The protein localises to the cytoplasm. In terms of biological role, associates with the EF-Tu.GDP complex and induces the exchange of GDP to GTP. It remains bound to the aminoacyl-tRNA.EF-Tu.GTP complex up to the GTP hydrolysis stage on the ribosome. This chain is Elongation factor Ts, found in Sinorhizobium fredii (strain NBRC 101917 / NGR234).